Consider the following 372-residue polypeptide: Histidinol-phosphate aminotransferase (372 aa).

The residue at position 234 (Lys-234) is an N6-(pyridoxal phosphate)lysine.

The protein belongs to the class-II pyridoxal-phosphate-dependent aminotransferase family. Histidinol-phosphate aminotransferase subfamily. As to quaternary structure, homodimer. Requires pyridoxal 5'-phosphate as cofactor.

It catalyses the reaction L-histidinol phosphate + 2-oxoglutarate = 3-(imidazol-4-yl)-2-oxopropyl phosphate + L-glutamate. It participates in amino-acid biosynthesis; L-histidine biosynthesis; L-histidine from 5-phospho-alpha-D-ribose 1-diphosphate: step 7/9. The protein is Histidinol-phosphate aminotransferase (hisC) of Corynebacterium efficiens (strain DSM 44549 / YS-314 / AJ 12310 / JCM 11189 / NBRC 100395).